A 462-amino-acid polypeptide reads, in one-letter code: MSAEPHPLYRQLPAIDRLLNEPEMAPLLAEYGPVLLADTLRQLQAEAREYIGQFHTLADWCADWPAALRQRLNQRQPALKPVFNLTGTVLHTNLGRAPLAESAIAAVTDAMRSAVTLEYSLEGAGRGHRDRAVADLLCALTGAEDACIVNNNAAAVFLLLTVMAAGKQVVVSRGELVEIGGAFRIPDVMRQAGCDLVEVGTTNRTHLKDYRQAINENTGLLMKVHTSNYSIEGFTAAVSEQQLAALGQECSIPTATDLGSGSLVDMTRYGLPAEPMPQQLIAAGVDLVTFSGDKLLGGPQAGIILGKKQWIERLQQHPLKRALRADKMTLAALDATLRLYQQPDRLVEQLPSLRLLTRPASEIAACAQRLLAPLIACYGTDFTLDIESCWSQIGSGSLPVDRLPSWALTFTPKDGRGSTLEALTARWRTLTKPVIGRVADGRLWLDLRCLEDEAALLRELAS.

Position 294 is an N6-(pyridoxal phosphate)lysine (Lys-294).

Belongs to the SelA family. As to quaternary structure, homodecamer; pentamer of dimers. Binds only one seryl-tRNA(Sec) per dimer. Pyridoxal 5'-phosphate serves as cofactor.

The protein localises to the cytoplasm. It carries out the reaction L-seryl-tRNA(Sec) + selenophosphate + H(+) = L-selenocysteinyl-tRNA(Sec) + phosphate. It participates in aminoacyl-tRNA biosynthesis; selenocysteinyl-tRNA(Sec) biosynthesis; selenocysteinyl-tRNA(Sec) from L-seryl-tRNA(Sec) (bacterial route): step 1/1. Converts seryl-tRNA(Sec) to selenocysteinyl-tRNA(Sec) required for selenoprotein biosynthesis. The polypeptide is L-seryl-tRNA(Sec) selenium transferase (Yersinia pseudotuberculosis serotype O:1b (strain IP 31758)).